We begin with the raw amino-acid sequence, 246 residues long: Ly6/PLAUR domain-containing protein 4 (246 aa).

A signal peptide spans 1 to 26 (MGPQHLSPMQLLCLLGAISSLPWAEA). Residue Asn-117 is glycosylated (N-linked (GlcNAc...) asparagine). In terms of domain architecture, UPAR/Ly6 spans 142–223 (CPTCVGEHSK…INIVEKALFT (82 aa)). Ala-225 carries GPI-anchor amidated alanine lipidation. Positions 226 to 246 (GTPCRSPSWGILLGLLFAFKG) are cleaved as a propeptide — removed in mature form.

The protein resides in the cell membrane. The chain is Ly6/PLAUR domain-containing protein 4 (LYPD4) from Bos taurus (Bovine).